Consider the following 277-residue polypeptide: 4-hydroxy-tetrahydrodipicolinate reductase (277 aa).

Residues 11–16 (GALGRM) and 110–112 (GTT) each bind NAD(+). The active-site Proton donor/acceptor is the H166. Residue H167 coordinates (S)-2,3,4,5-tetrahydrodipicolinate. The active-site Proton donor is K170. 176–177 (GT) is a (S)-2,3,4,5-tetrahydrodipicolinate binding site.

This sequence belongs to the DapB family.

The protein localises to the cytoplasm. It carries out the reaction (S)-2,3,4,5-tetrahydrodipicolinate + NAD(+) + H2O = (2S,4S)-4-hydroxy-2,3,4,5-tetrahydrodipicolinate + NADH + H(+). The enzyme catalyses (S)-2,3,4,5-tetrahydrodipicolinate + NADP(+) + H2O = (2S,4S)-4-hydroxy-2,3,4,5-tetrahydrodipicolinate + NADPH + H(+). It participates in amino-acid biosynthesis; L-lysine biosynthesis via DAP pathway; (S)-tetrahydrodipicolinate from L-aspartate: step 4/4. Its function is as follows. Catalyzes the conversion of 4-hydroxy-tetrahydrodipicolinate (HTPA) to tetrahydrodipicolinate. In Synechococcus sp. (strain CC9902), this protein is 4-hydroxy-tetrahydrodipicolinate reductase.